The sequence spans 206 residues: Large ribosomal subunit protein uL4 (206 aa).

The segment at 46-78 (GNRAQKDREQVKHTTKKPWRQKGTGRARAGMSS) is disordered. Positions 58–70 (HTTKKPWRQKGTG) are enriched in basic residues.

Belongs to the universal ribosomal protein uL4 family. In terms of assembly, part of the 50S ribosomal subunit.

In terms of biological role, one of the primary rRNA binding proteins, this protein initially binds near the 5'-end of the 23S rRNA. It is important during the early stages of 50S assembly. It makes multiple contacts with different domains of the 23S rRNA in the assembled 50S subunit and ribosome. Its function is as follows. Forms part of the polypeptide exit tunnel. This is Large ribosomal subunit protein uL4 from Burkholderia lata (strain ATCC 17760 / DSM 23089 / LMG 22485 / NCIMB 9086 / R18194 / 383).